The sequence spans 144 residues: (R)-specific enoyl-CoA hydratase (144 aa).

A MaoC-like domain is found at 13–128 (DIKEGQSASL…TFRTTCTVAG (116 aa)).

As to quaternary structure, homotetramer.

It catalyses the reaction a (3R)-3-hydroxyacyl-CoA = a (2E)-enoyl-CoA + H2O. Functionally, catalyzes the hydration of trans-2-enoyl-CoAs with a chain-length of 4-6 carbon atoms, forming the corresponding (3R)-3-hydroxyacyl-CoAs, which can then be utilized for the production of polyhydroxyalkanoates (PHA) polymers. Cannot use trans-2,3-octenoyl-CoA as substrate. The polypeptide is (R)-specific enoyl-CoA hydratase (Rhodospirillum rubrum (strain ATCC 11170 / ATH 1.1.1 / DSM 467 / LMG 4362 / NCIMB 8255 / S1)).